The chain runs to 203 residues: Probable GTP-binding protein EngB (203 aa).

The region spanning 24–199 is the EngB-type G domain; that stretch reads DGSEVAFAGR…HTVIETWLGL (176 aa). GTP contacts are provided by residues 32-39, 59-63, 77-80, 144-147, and 178-180; these read GRSNAGKS, GRTQQ, DLPG, TKAD, and FSS. Mg(2+)-binding residues include Ser39 and Thr61.

It belongs to the TRAFAC class TrmE-Era-EngA-EngB-Septin-like GTPase superfamily. EngB GTPase family. Mg(2+) is required as a cofactor.

Necessary for normal cell division and for the maintenance of normal septation. The polypeptide is Probable GTP-binding protein EngB (Xylella fastidiosa (strain 9a5c)).